The primary structure comprises 353 residues: Protein CEPU-1 (353 aa).

Residues 1–28 (MAQAKMQHPVSWVIFAGMAALLLFQGVP) form the signal peptide. 3 consecutive Ig-like C2-type domains span residues 37-124 (PKAM…PKTS), 134-216 (PKIT…VKVT), and 220-314 (PPYI…ETTT). N-linked (GlcNAc...) asparagine glycosylation is found at Asn42, Asn68, and Asn150. Cys55 and Cys113 are oxidised to a cystine. Cystine bridges form between Cys155–Cys199 and Cys241–Cys293. Asn282, Asn290, and Asn303 each carry an N-linked (GlcNAc...) asparagine glycan. Ser330 carries the GPI-anchor amidated serine lipid modification. The propeptide at 331–353 (GAWRRGSCAWLLALPLAQLARQF) is removed in mature form.

Belongs to the immunoglobulin superfamily. IgLON family. Interacts with NEGR1. In terms of tissue distribution, found on the dendrites, somata and axons of developing Purkinje cells. Undetectable on other neurons like Golgi or granule cells.

Its subcellular location is the cell membrane. It may be a cellular address molecule specific to Purkinje cells. It may represent a receptor or a subunit of a receptor complex. The sequence is that of Protein CEPU-1 from Gallus gallus (Chicken).